The primary structure comprises 239 residues: DNA repair protein RecO (239 aa).

Belongs to the RecO family.

Involved in DNA repair and RecF pathway recombination. The sequence is that of DNA repair protein RecO from Bifidobacterium longum subsp. infantis (strain ATCC 15697 / DSM 20088 / JCM 1222 / NCTC 11817 / S12).